The following is a 352-amino-acid chain: uncharacterized protein (352 aa).

The protein to M.pneumoniae MPN_633 (in the N-terminal section), and M.pneumoniae MPN_634 (in the C-terminal section).

This is an uncharacterized protein from Mycoplasma pneumoniae (strain ATCC 29342 / M129 / Subtype 1) (Mycoplasmoides pneumoniae).